The following is a 1043-amino-acid chain: P3N-PIPO polyprotein (1043 aa).

The 144-residue stretch at 219-362 folds into the Peptidase S30 domain; sequence KMNDQGVDML…RTMSHKIVHF (144 aa). Catalysis depends on for P1 proteinase activity residues His270, Asp279, and Ser313. The Involved in interaction with stylet and aphid transmission signature appears at 414–417; that stretch reads KITC. Residues 672-674 carry the Involved in virions binding and aphid transmission motif; that stretch reads PTK. The Peptidase C6 domain occupies 698–820; that stretch reads MYIAKEGYCY…ESSLKHYRVG (123 aa). Residues Cys706 and His779 each act as for helper component proteinase activity in the active site.

Belongs to the potyviridae P3N-PIPO polyprotein family. Interacts (via PIPO domain) with host PCaP1 protein; this interaction may help to anchor the movement complex to the plasma membrane from which the complex could move to the plasmodesmata. In terms of processing, potyviral RNA is expressed as two polyproteins which undergo post-translational proteolytic processing. Genome polyprotein is processed by NIa-pro, P1 and HC-pro proteinases resulting in the production of at least ten individual proteins. P3N-PIPO is cleaved by P1 and HC-pro proteinases resulting in the production of three individual proteins. The P1 proteinase and the HC-pro cleave only their respective C-termini autocatalytically.

The protein resides in the host cell junction. It localises to the host plasmodesma. The enzyme catalyses Hydrolyzes a Gly-|-Gly bond at its own C-terminus, commonly in the sequence -Tyr-Xaa-Val-Gly-|-Gly, in the processing of the potyviral polyprotein.. In terms of biological role, cysteine protease that cleaves a Gly-Gly dipeptide at its own C-terminus. Required for aphid transmission and also has proteolytic activity. Interacts with virions and aphid stylets. Acts as a suppressor of RNA-mediated gene silencing, also known as post-transcriptional gene silencing (PTGS), a mechanism of plant viral defense that limits the accumulation of viral RNAs. May have RNA-binding activity. Functionally, allows efficient cell to cell propagation, by bypassing the host cell wall barrier. Transports viral genome to neighboring plant cells directly through plasmosdesmata, without any budding. The protein is P3N-PIPO polyprotein of Alliaria petiolata (Garlic mustard).